The following is a 230-amino-acid chain: Tail fiber protein p36 (230 aa).

In terms of assembly, the distal half-fiber contains two molecules each of Gp36 and Gp37 and one molecule of Gp35.

It localises to the virion. Functionally, structural component of the distal-half tail fiber. The protein is Tail fiber protein p36 (36) of Enterobacteria phage K3 (Bacteriophage K3).